A 467-amino-acid polypeptide reads, in one-letter code: ADAM DEC1 (467 aa).

A signal peptide spans 1–33 (MLPGTSRLPTEASMSWVLLSVLWLIIQIQVIDA). A propeptide spanning residues 34–208 (TLTPELKPHE…LRTSRSLKNP (175 aa)) is cleaved from the precursor. 2 N-linked (GlcNAc...) asparagine glycosylation sites follow: asparagine 61 and asparagine 236. The Peptidase M12B domain occupies 217-411 (KYIGLFLVLD…RNARCLLLAP (195 aa)). Disulfide bonds link cysteine 327/cysteine 406 and cysteine 368/cysteine 373. Histidine 351 lines the Zn(2+) pocket. Glutamate 352 is a catalytic residue. Positions 355 and 361 each coordinate Zn(2+). In terms of domain architecture, Disintegrin spans 418 to 467 (KPTCGNQVLDVGEECDCGSPEECTNLCCEPLTCRLKSQPDCSEASNHITE).

Requires Zn(2+) as cofactor. As to expression, expressed highly in uterus during pregnancy.

Its subcellular location is the secreted. May play an important role in the control of the immune response and during pregnancy. The sequence is that of ADAM DEC1 (Adamdec1) from Mus musculus (Mouse).